Reading from the N-terminus, the 283-residue chain is Shikimate dehydrogenase (NADP(+)) (283 aa).

Residues 22–24 and Thr69 contribute to the shikimate site; that span reads SRS. The active-site Proton acceptor is the Lys73. Asn93 and Asp108 together coordinate shikimate. NADP(+) is bound by residues 133–137 and Leu222; that span reads GAGGS. Residue Tyr224 coordinates shikimate. Gly245 lines the NADP(+) pocket.

The protein belongs to the shikimate dehydrogenase family. Homodimer.

It carries out the reaction shikimate + NADP(+) = 3-dehydroshikimate + NADPH + H(+). It participates in metabolic intermediate biosynthesis; chorismate biosynthesis; chorismate from D-erythrose 4-phosphate and phosphoenolpyruvate: step 4/7. Its function is as follows. Involved in the biosynthesis of the chorismate, which leads to the biosynthesis of aromatic amino acids. Catalyzes the reversible NADPH linked reduction of 3-dehydroshikimate (DHSA) to yield shikimate (SA). In Rhodopseudomonas palustris (strain BisB5), this protein is Shikimate dehydrogenase (NADP(+)).